We begin with the raw amino-acid sequence, 234 residues long: Phosphoribosylaminoimidazole-succinocarboxamide synthase (234 aa).

It belongs to the SAICAR synthetase family.

It carries out the reaction 5-amino-1-(5-phospho-D-ribosyl)imidazole-4-carboxylate + L-aspartate + ATP = (2S)-2-[5-amino-1-(5-phospho-beta-D-ribosyl)imidazole-4-carboxamido]succinate + ADP + phosphate + 2 H(+). It participates in purine metabolism; IMP biosynthesis via de novo pathway; 5-amino-1-(5-phospho-D-ribosyl)imidazole-4-carboxamide from 5-amino-1-(5-phospho-D-ribosyl)imidazole-4-carboxylate: step 1/2. The protein is Phosphoribosylaminoimidazole-succinocarboxamide synthase of Staphylococcus epidermidis (strain ATCC 35984 / DSM 28319 / BCRC 17069 / CCUG 31568 / BM 3577 / RP62A).